A 711-amino-acid chain; its full sequence is 1,4-alpha-glucan branching enzyme GlgB (711 aa).

D392 acts as the Nucleophile in catalysis. The active-site Proton donor is the E443.

This sequence belongs to the glycosyl hydrolase 13 family. GlgB subfamily. Monomer.

The enzyme catalyses Transfers a segment of a (1-&gt;4)-alpha-D-glucan chain to a primary hydroxy group in a similar glucan chain.. Its pathway is glycan biosynthesis; glycogen biosynthesis. Functionally, catalyzes the formation of the alpha-1,6-glucosidic linkages in glycogen by scission of a 1,4-alpha-linked oligosaccharide from growing alpha-1,4-glucan chains and the subsequent attachment of the oligosaccharide to the alpha-1,6 position. The chain is 1,4-alpha-glucan branching enzyme GlgB from Corynebacterium jeikeium (strain K411).